The following is a 781-amino-acid chain: Protein translocase subunit SecA 2 (781 aa).

Residues glutamine 85, 103-107 (GEGKT), and aspartate 491 each bind ATP.

The protein belongs to the SecA family. As to quaternary structure, monomer and homodimer. Part of the essential Sec protein translocation apparatus which comprises SecA, SecYEG and auxiliary proteins SecDF. Other proteins may also be involved.

Its subcellular location is the cell membrane. The protein localises to the cytoplasm. The catalysed reaction is ATP + H2O + cellular proteinSide 1 = ADP + phosphate + cellular proteinSide 2.. Part of the Sec protein translocase complex. Interacts with the SecYEG preprotein conducting channel. Has a central role in coupling the hydrolysis of ATP to the transfer of proteins into and across the cell membrane, serving as an ATP-driven molecular motor driving the stepwise translocation of polypeptide chains across the membrane. The sequence is that of Protein translocase subunit SecA 2 from Clostridioides difficile (strain 630) (Peptoclostridium difficile).